The chain runs to 513 residues: ATP synthase subunit alpha 1 (513 aa).

169–176 (GDRQTGKT) is a binding site for ATP.

The protein belongs to the ATPase alpha/beta chains family. As to quaternary structure, F-type ATPases have 2 components, CF(1) - the catalytic core - and CF(0) - the membrane proton channel. CF(1) has five subunits: alpha(3), beta(3), gamma(1), delta(1), epsilon(1). CF(0) has three main subunits: a(1), b(2) and c(9-12). The alpha and beta chains form an alternating ring which encloses part of the gamma chain. CF(1) is attached to CF(0) by a central stalk formed by the gamma and epsilon chains, while a peripheral stalk is formed by the delta and b chains.

It localises to the cell inner membrane. The catalysed reaction is ATP + H2O + 4 H(+)(in) = ADP + phosphate + 5 H(+)(out). Functionally, produces ATP from ADP in the presence of a proton gradient across the membrane. The alpha chain is a regulatory subunit. The polypeptide is ATP synthase subunit alpha 1 (Vibrio campbellii (strain ATCC BAA-1116)).